A 360-amino-acid chain; its full sequence is G-protein coupled receptor 15 (360 aa).

Topologically, residues 1–33 are extracellular; that stretch reads MDPEETSVYLDYYYATSPNSDIRETHSHVPYTS. The chain crosses the membrane as a helical span at residues 34–54; that stretch reads VFLPVFYTAVFLTGVLGNLVL. Topologically, residues 55-69 are cytoplasmic; the sequence is MGALHFKPGSRRLID. A helical transmembrane segment spans residues 70-90; sequence IFIINLAASDFIFLVTLPLWV. At 91–120 the chain is on the extracellular side; it reads DKEASLGLWRTGSFLCKGSSYMISVNMHCS. Residues 121–141 form a helical membrane-spanning segment; sequence VLLLTCMSVDRYLAIVWPVVS. The Cytoplasmic portion of the chain corresponds to 142–149; the sequence is RKFRRTDC. Residues 150–170 traverse the membrane as a helical segment; sequence AYVVCASIWFISCLLGLPTLL. Topologically, residues 171–192 are extracellular; it reads SRELTLIDDKPYCAEKKATPIK. Residues 193 to 213 traverse the membrane as a helical segment; that stretch reads LIWSLVALIFTFFVPLLSIVT. Over 214-239 the chain is Cytoplasmic; that stretch reads CYCCIARKLCAHYQQSGKHNKKLKKS. A helical transmembrane segment spans residues 240-260; the sequence is IKIIFIVVAAFLVSWLPFNTF. Over 261–284 the chain is Extracellular; that stretch reads KFLAIVSGLRQEHYLPSAILQLGM. A helical transmembrane segment spans residues 285 to 305; sequence EVSGPLAFANSCVNPFIYYIF. Topologically, residues 306-360 are cytoplasmic; sequence DSYIRRAIVHCLCPCLKNYDFGSSTETSDSHLTKALSTFIHAEDFARRRKRSVSL. At serine 359 the chain carries Phosphoserine.

Belongs to the G-protein coupled receptor 1 family. Interacts with adapter YWHAE; this interaction promotes ER-to-Golgi transport of GPR15. Interacts with GNAI1; this interaction initiates the signaling pathway. Phosphorylation is necessary for YWHAE binding and efficient surface expression. In terms of processing, O-glycosylated. Sialylated O-glycans in the N-terminal tail inhibits binding of GPR15LG. Post-translationally, sulfation is required for efficient binding of GPR15LG. Highly expressed in lymphoid tissues, including macrophages and peripheral blood mononuclear cells.

The protein resides in the cell membrane. G protein-coupled receptor that plays an important role in immune homeostasis. Acts via its natural ligand GPR15LG, a chemokine-like polypeptide strongly expressed in gastrointestinal tissues. GPR15-GPR15LG signaling axis regulates intestinal homeostasis and inflammation through the migration of immune cells. Controls thereby the specific homing of T-cells, particularly FOXP3+ regulatory T-cells (Tregs), to the large intestine lamina propria. Also required for skin localization of thymus-derived dendritic epidermal T-cells. Plays an important role in mediating cytoprotective function as well as angiogenesis of thrombomodulin. Mechanistically, preferentially signals through the Gi/o pathway to inhibit adenylate cyclase activity and activate a phosphatidylinositol-calcium second messenger system that regulates the release of Ca(2+) ions from intracellular stores. Its function is as follows. (Microbial infection) Acts as an alternative coreceptor with CD4 for HIV-1 infection. The protein is G-protein coupled receptor 15 (GPR15) of Homo sapiens (Human).